A 306-amino-acid chain; its full sequence is GTP-binding protein RAD (306 aa).

Positions Met-1–Arg-13 are enriched in gly residues. The segment at Met-1–Tyr-91 is disordered. Arg-23 bears the Omega-N-methylarginine mark. Ser-25 carries the phosphoserine modification. Positions Ala-56–Asp-88 are enriched in low complexity. GTP-binding positions include Gly-97–Ser-104 and Asn-201–Asp-204. The segment at Ala-276–Ala-295 is calmodulin-binding.

The protein belongs to the small GTPase superfamily. RGK family. In terms of assembly, interacts with Calmodulin preferentially in the inactive, GDP-bound form. Interacts with CAMK2D. Interacts with CACNB2; interaction may be involved in beta-adrenergic regulation of heart rate and contractile force. Interaction with CACNB2 regulates the trafficking of CACNA1C to the cell membrane.

It is found in the cell membrane. Functionally, may regulate basal voltage-dependent L-type Ca(2+) currents and be required for beta-adrenergic augmentation of Ca(2+) influx in cardiomyocytes, thereby regulating increases in heart rate and contractile force. May play an important role in cardiac antiarrhythmia via the strong suppression of voltage-dependent L-type Ca(2+) currents. Regulates voltage-gated L-type calcium channel subunit alpha-1C trafficking to the cell membrane. Inhibits cardiac hypertrophy through the calmodulin-dependent kinase II (CaMKII) pathway. Inhibits phosphorylation and activation of CAMK2D. This Rattus norvegicus (Rat) protein is GTP-binding protein RAD (Rrad).